Reading from the N-terminus, the 33-residue chain is Pardaxin P-2 (33 aa).

It belongs to the pardaxin family. In terms of assembly, in aqueous solution exists as a tetramer.

The protein localises to the secreted. The protein resides in the target cell membrane. Its function is as follows. Exhibits unusual shark repellent and surfactant properties. Forms voltage-dependent, ion-permeable channels in membranes. At high concentration causes cell membrane lysis. This is Pardaxin P-2 from Pardachirus pavoninus (Peacock sole).